Here is an 85-residue protein sequence, read N- to C-terminus: RNA-binding protein Hfq (85 aa).

In terms of domain architecture, Sm spans 9–69 (DQLLNTARKD…ISTIIPAKII (61 aa)).

Belongs to the Hfq family. Homohexamer.

Its function is as follows. RNA chaperone that binds small regulatory RNA (sRNAs) and mRNAs to facilitate mRNA translational regulation in response to envelope stress, environmental stress and changes in metabolite concentrations. Also binds with high specificity to tRNAs. The protein is RNA-binding protein Hfq of Leptospira interrogans serogroup Icterohaemorrhagiae serovar copenhageni (strain Fiocruz L1-130).